The chain runs to 409 residues: Cobalt-precorrin-5B C(1)-methyltransferase (409 aa).

Belongs to the CbiD family.

The catalysed reaction is Co-precorrin-5B + S-adenosyl-L-methionine = Co-precorrin-6A + S-adenosyl-L-homocysteine. The protein operates within cofactor biosynthesis; adenosylcobalamin biosynthesis; cob(II)yrinate a,c-diamide from sirohydrochlorin (anaerobic route): step 6/10. Its function is as follows. Catalyzes the methylation of C-1 in cobalt-precorrin-5B to form cobalt-precorrin-6A. The chain is Cobalt-precorrin-5B C(1)-methyltransferase from Methanopyrus kandleri (strain AV19 / DSM 6324 / JCM 9639 / NBRC 100938).